The primary structure comprises 193 residues: Allatostatin A (193 aa).

The N-terminal stretch at 1–25 (MKTSSLIAMRLIIFYLLSVVGRSTA) is a signal peptide. The propeptide occupies 26 to 64 (AVEEAPASSLHIPRLNPLSSNLEYDEPSEKRAYAYISEY). Isoleucine amide is present on isoleucine 74. A propeptide spanning residues 78–84 (WIDNSED) is cleaved from the precursor. 2 positions are modified to isoleucine amide: isoleucine 94 and isoleucine 105. The propeptide occupies 109–139 (NSGYRPLGMDFSVDNMDFHSREDNLDDFIDD). An Isoleucine amide modification is found at isoleucine 150. Serine 165 is modified (serine amide). The propeptide occupies 169 to 193 (LNDVVGPKYLLGLGKGLSENENLIQ).

Belongs to the allatostatin family. As to expression, allatostatins A1, A2 and A3 are expressed in brain, antennal lobes, optical lobes, gnathal ganglia, the retrocerebral complex and thoracic, abdominal and ventral ganglia. Allatostain A4 is expressed in brain (at protein level).

It is found in the secreted. In terms of biological role, may act as a neurotransmitter or neuromodulator. This is Allatostatin A from Camponotus floridanus (Florida carpenter ant).